Reading from the N-terminus, the 236-residue chain is MFDSLKNFLKKSIEDLDGKELEISKEFQEYHNKDSKYIIKNWLFESPQYRKWRVTKLDGGDKLQVFNTVAYPNFKSESPILGADILWFGTSQKLLAIFDYQPLIQEKKYLYQYCSSLDFIKKKYSVFDNNKMKNIYDSKKYFSPWVMICRGNKLNLDRDLNSIFYLFVSDYLRINKLNQNNQFLNYEQIKNKQIDYDKYSAEKDPADKLFKSFFGENWTCNFINNFLFTLNNYSKD.

It belongs to the HY2 family.

It carries out the reaction 15,16-dihydrobiliverdin + oxidized 2[4Fe-4S]-[ferredoxin] = biliverdin IXalpha + reduced 2[4Fe-4S]-[ferredoxin] + 2 H(+). Its function is as follows. Catalyzes the two-electron reduction of biliverdin IX-alpha at the C15 methine bridge. The protein is 15,16-dihydrobiliverdin:ferredoxin oxidoreductase of Prochlorococcus marinus (strain MIT 9515).